The chain runs to 503 residues: Palmitoleoyl-protein carboxylesterase NOTUM (503 aa).

The N-terminal stretch at methionine 1–glycine 19 is a signal peptide. Residues arginine 23 to glycine 53 form a disordered region. Positions proline 33–proline 43 are enriched in pro residues. A Phosphoserine modification is found at serine 88. A glycan (N-linked (GlcNAc...) asparagine) is linked at asparagine 103. Catalysis depends on charge relay system residues serine 239, aspartate 347, and histidine 396.

This sequence belongs to the pectinacetylesterase family. Notum subfamily. In terms of tissue distribution, widely expressed. Expressed in lung, ovary, kidney, liver and brain. Not detected in thymus, heart, spleen, stomach, skeletal muscle and bone marrow.

Its subcellular location is the secreted. The enzyme catalyses [Wnt protein]-O-(9Z)-hexadecenoyl-L-serine + H2O = [Wnt protein]-L-serine + (9Z)-hexadecenoate + H(+). Carboxylesterase that acts as a key negative regulator of the Wnt signaling pathway by specifically mediating depalmitoleoylation of WNT proteins. Serine palmitoleoylation of WNT proteins is required for efficient binding to frizzled receptors. The protein is Palmitoleoyl-protein carboxylesterase NOTUM of Mus musculus (Mouse).